We begin with the raw amino-acid sequence, 578 residues long: Septation ring formation regulator EzrA (578 aa).

Over 1 to 8 the chain is Extracellular; it reads MKNNWIII. Residues 9–27 form a helical membrane-spanning segment; that stretch reads LVLVIVIIAAVLYLIGYFM. The Cytoplasmic segment spans residues 28 to 578; sequence RKKNQEQLDE…NINNPNLTAI (551 aa). Coiled-coil stretches lie at residues 103–165, 256–285, and 394–490; these read RFMK…DDKA, QNFA…AAVE, and KILD…DDLE.

It belongs to the EzrA family.

It localises to the cell membrane. Negative regulator of FtsZ ring formation; modulates the frequency and position of FtsZ ring formation. Inhibits FtsZ ring formation at polar sites. Interacts either with FtsZ or with one of its binding partners to promote depolymerization. The protein is Septation ring formation regulator EzrA of Enterococcus faecalis (strain ATCC 700802 / V583).